The sequence spans 193 residues: Small COPII coat GTPase SAR1 (193 aa).

The STAR; SAR1-N-terminal activation recruitment. Required for the activation and subsequent recruitment to ER membrane motif lies at 3–5 (FLW). The interval 11–15 (VLNML) is mediates recruitment to ER membranes. D30 is a binding site for Mg(2+). Residues N31, A32, G33, K34, T35, and T36 each contribute to the GDP site. N31 contributes to the GTP binding site. Residues G33, K34, T35, and T36 each coordinate GTP. D71 contacts Mg(2+). Residues N130, K131, D133, V176, and L177 each coordinate GDP. 5 residues coordinate GTP: N130, K131, D133, V176, and L177.

It belongs to the small GTPase superfamily. SAR1 family. As to quaternary structure, homodimer; upon association with membrane. Part of the coat protein complex II/COPII, composed of SEC23/24 and SEC13/31 heterodimers, that it helps recruit and assemble on endoplasmic reticulum (ER) membranes at ER exit sites.

The protein localises to the endoplasmic reticulum membrane. It localises to the golgi apparatus. The protein resides in the golgi stack membrane. It is found in the cytoplasm. Its subcellular location is the cytosol. The enzyme catalyses GTP + H2O = GDP + phosphate + H(+). Its activity is regulated as follows. Small GTPases activation is mediated by guanine exchange factors (GEF), while inactivation through hydrolysis of the bound GTP is stimulated by GTPase activating proteins (GAP). Functionally, small GTPase that cycles between an active GTP-bound and an inactive GDP-bound state and mainly functions in vesicle-mediated endoplasmic reticulum (ER) to Golgi transport. The active GTP-bound form inserts into the endoplasmic reticulum membrane where it recruits the remainder of the coat protein complex II/COPII. The coat protein complex II assembling and polymerizing on endoplasmic reticulum membrane is responsible for both the sorting of cargos and the deformation and budding of membranes into vesicles destined to the Golgi. Plays a role in transporting the tyrosine kinase receptor let-23 from the endoplasmic reticulum to the plasma membrane of vulval precursor cells. The chain is Small COPII coat GTPase SAR1 from Caenorhabditis elegans.